Reading from the N-terminus, the 976-residue chain is Vacuolar membrane protease (976 aa).

The Cytoplasmic portion of the chain corresponds to 1 to 15 (MKLKSVFRSVLKYRK). A helical transmembrane segment spans residues 16–36 (TNLSLLLLITYSIITLLYIFD). The Vacuolar segment spans residues 37–359 (HERYKLNLPK…KFFVISAKTL (323 aa)). Residues Asn-96 and Asn-121 are each glycosylated (N-linked (GlcNAc...) asparagine). Zn(2+)-binding residues include His-156 and Asp-168. N-linked (GlcNAc...) asparagine glycosylation is present at Asn-189. The active-site Proton acceptor is Glu-200. Glu-201 contributes to the Zn(2+) binding site. 2 N-linked (GlcNAc...) asparagine glycosylation sites follow: Asn-212 and Asn-217. Residues Glu-226 and His-300 each coordinate Zn(2+). Residues 360–380 (FYWNCIFLLVSPVVAIGLYLI) form a helical membrane-spanning segment. The Cytoplasmic segment spans residues 381–392 (SRDRMTWKSHSW). The helical transmembrane segment at 393–412 (LSWTRFPLSLAAGIIVQKLF) threads the bilayer. Topologically, residues 413–428 (SNDIIRSNPLTFSRNY) are vacuolar. Residues 429–449 (FWPISAFFTQVIFTSYVLINC) form a helical membrane-spanning segment. Residues 450-461 (SNFFFPCADMKS) are Cytoplasmic-facing. Residues 462–482 (LSIIELFIILWTILLFTSKLL) traverse the membrane as a helical segment. Residues 483-496 (YSSDYRYTGLYPLS) are Vacuolar-facing. A helical transmembrane segment spans residues 497-517 (IFFLLSTIAAILRLLALALGM). The Cytoplasmic portion of the chain corresponds to 518–627 (RTRKRLGREC…NSLKLEYTDY (110 aa)). The interval 528–610 (RDHHSNYSSH…PLLKGSNSME (83 aa)) is disordered. Polar residues predominate over residues 549–558 (NLEQPQDQFT). Residues 559 to 570 (SSQDDQASIQDD) show a composition bias toward low complexity. Residues 582–601 (NVDEDHGMDSSSQQHDERVP) are compositionally biased toward basic and acidic residues. Residues 628–648 (AWIIQFLLIVPIPSFILFNSV) form a helical membrane-spanning segment. The Vacuolar segment spans residues 649–668 (DVIMDALNHTVQEGSKATFD). N-linked (GlcNAc...) asparagine glycosylation is present at Asn-656. Residues 669 to 689 (VLRFGMVGSILMALPILPFFY) form a helical membrane-spanning segment. Residues 690-692 (KVN) lie on the Cytoplasmic side of the membrane. The helical transmembrane segment at 693-713 (YITISLTALLFLISASKTLLV) threads the bilayer. The Vacuolar portion of the chain corresponds to 714–976 (HPFTNSNPLK…LVIVKDAIIL (263 aa)). Residues Asn-768, Asn-796, Asn-811, Asn-866, and Asn-937 are each glycosylated (N-linked (GlcNAc...) asparagine).

It belongs to the peptidase M28 family. It depends on Zn(2+) as a cofactor.

The protein resides in the vacuole membrane. Its function is as follows. May be involved in vacuolar sorting and osmoregulation. The protein is Vacuolar membrane protease of Saccharomyces cerevisiae (strain RM11-1a) (Baker's yeast).